The primary structure comprises 322 residues: Phosphoenolpyruvate transferase (322 aa).

D58 contributes to the 7,8-didemethyl-8-hydroxy-5-deazariboflavin binding site.

This sequence belongs to the CofD family. Homodimer. The cofactor is Mg(2+).

The catalysed reaction is enolpyruvoyl-2-diphospho-5'-guanosine + 7,8-didemethyl-8-hydroxy-5-deazariboflavin = dehydro coenzyme F420-0 + GMP + H(+). Its pathway is cofactor biosynthesis; coenzyme F420 biosynthesis. Its function is as follows. Catalyzes the transfer of the phosphoenolpyruvate moiety from enoylpyruvoyl-2-diphospho-5'-guanosine (EPPG) to 7,8-didemethyl-8-hydroxy-5-deazariboflavin (FO) with the formation of dehydro coenzyme F420-0 and GMP. This is Phosphoenolpyruvate transferase from Thermobifida fusca (strain YX).